The following is a 152-amino-acid chain: Arginine repressor (152 aa).

This sequence belongs to the ArgR family.

It is found in the cytoplasm. It participates in amino-acid biosynthesis; L-arginine biosynthesis [regulation]. In terms of biological role, regulates arginine biosynthesis genes. This chain is Arginine repressor, found in Lactiplantibacillus plantarum (strain ATCC BAA-793 / NCIMB 8826 / WCFS1) (Lactobacillus plantarum).